The chain runs to 275 residues: MPELPEVETVRRTLAGLVRGKTIDAVDVRWTKIIKRPEEPEEFARLLAGQTIQSIGRRGKFLLFHLDDCVMVSHLRMEGKYGLHQNDEPLDKHVHVIFRFTDGSELRYRDVRKFGTMHLFKPGEELTELPLRQLGPEPFSSEFTADYLRERLKKTNRSVKTALLDQRTVVGLGNIYVDEALFRAGIHPEATANKLTKKQTVLLHKEIIQTLKEAVEAGGSTVRSYINSQGEIGMFQLKLFVYGRKDEPCKKCGSPIEKTVVGGRGTHFCIKCQKK.

Catalysis depends on Pro-2, which acts as the Schiff-base intermediate with DNA. The active-site Proton donor is Glu-3. Lys-60 (proton donor; for beta-elimination activity) is an active-site residue. DNA-binding residues include His-93 and Arg-112. The FPG-type zinc finger occupies 240 to 274 (FVYGRKDEPCKKCGSPIEKTVVGGRGTHFCIKCQK). Catalysis depends on Arg-264, which acts as the Proton donor; for delta-elimination activity.

It belongs to the FPG family. In terms of assembly, monomer. Requires Zn(2+) as cofactor.

The catalysed reaction is Hydrolysis of DNA containing ring-opened 7-methylguanine residues, releasing 2,6-diamino-4-hydroxy-5-(N-methyl)formamidopyrimidine.. The enzyme catalyses 2'-deoxyribonucleotide-(2'-deoxyribose 5'-phosphate)-2'-deoxyribonucleotide-DNA = a 3'-end 2'-deoxyribonucleotide-(2,3-dehydro-2,3-deoxyribose 5'-phosphate)-DNA + a 5'-end 5'-phospho-2'-deoxyribonucleoside-DNA + H(+). In terms of biological role, involved in base excision repair of DNA damaged by oxidation or by mutagenic agents. Acts as a DNA glycosylase that recognizes and removes damaged bases. Has a preference for oxidized purines, such as 7,8-dihydro-8-oxoguanine (8-oxoG). Has AP (apurinic/apyrimidinic) lyase activity and introduces nicks in the DNA strand. Cleaves the DNA backbone by beta-delta elimination to generate a single-strand break at the site of the removed base with both 3'- and 5'-phosphates. The sequence is that of Formamidopyrimidine-DNA glycosylase from Bacillus licheniformis (strain ATCC 14580 / DSM 13 / JCM 2505 / CCUG 7422 / NBRC 12200 / NCIMB 9375 / NCTC 10341 / NRRL NRS-1264 / Gibson 46).